The chain runs to 83 residues: MSFFDYFRSKKNSTASVAKERLQIIVAHERGQREQPDYLPQLQQELLQVIRKYVQISDDMVQVEVDRNDHCSVLELNVTLPEK.

It belongs to the MinE family.

Prevents the cell division inhibition by proteins MinC and MinD at internal division sites while permitting inhibition at polar sites. This ensures cell division at the proper site by restricting the formation of a division septum at the midpoint of the long axis of the cell. The chain is Cell division topological specificity factor from Marinobacter nauticus (strain ATCC 700491 / DSM 11845 / VT8) (Marinobacter aquaeolei).